Consider the following 360-residue polypeptide: Mannose-1-phosphate guanylyltransferase catalytic subunit beta (360 aa).

The tract at residues 2-222 (KALILVGGYG…QGFWMDIGQP (221 aa)) is substrate-binding domain. Asp-110 lines the GDP-alpha-D-mannose pocket. Residue Asp-110 coordinates Mg(2+). Lys-162 is a catalytic residue. Asp-218 serves as a coordination point for GDP-alpha-D-mannose. A Mg(2+)-binding site is contributed by Asp-218. A hexapeptide repeat domain region spans residues 245-360 (CSGPGIVGNV…ESVPEPGIIM (116 aa)).

The protein belongs to the transferase hexapeptide repeat family. Component of the GMPPA-GMPPB mannose-1-phosphate guanylyltransferase complex composed of 4 GMPPA subunits and 8 GMPPB subunits; the complex is organized into three layers, a central layer made up of 2 GMPPA dimers sandwiched between two layers each made up of 2 GMPPB dimers. GMPPB catalytic activity is reduced when part of the complex and binding of GDP-alpha-D-Mannose by GMPPA induces allosteric feedback inhibition of GMPPB. It depends on Mg(2+) as a cofactor. As to expression, expressed in the liver (at protein level).

It localises to the cytoplasm. It carries out the reaction alpha-D-mannose 1-phosphate + GTP + H(+) = GDP-alpha-D-mannose + diphosphate. It functions in the pathway nucleotide-sugar biosynthesis; GDP-alpha-D-mannose biosynthesis; GDP-alpha-D-mannose from alpha-D-mannose 1-phosphate (GTP route): step 1/1. With respect to regulation, enzyme activity is reduced by incorporation into the GMPPA-GMPPB mannose-1-phosphate guanylyltransferase complex. Allosterically inhibited, when part of the GMPPA-GMPPB complex, by GDP-alpha-D-mannose binding to GMPPA. Its function is as follows. Catalytic subunit of the GMPPA-GMPPB mannose-1-phosphate guanylyltransferase complex. Catalyzes the formation of GDP-mannose, an essential precursor of glycan moieties of glycoproteins and glycolipids. Can catalyze the reverse reaction in vitro. Together with GMPPA regulates GDP-alpha-D-mannose levels. The protein is Mannose-1-phosphate guanylyltransferase catalytic subunit beta of Sus scrofa (Pig).